The following is a 98-amino-acid chain: Class II hydrophobin 2 (98 aa).

Residues 1 to 21 form the signal peptide; that stretch reads MFFSRISTIVSMTALFASALA. 4 disulfide bridges follow: cysteine 34-cysteine 80, cysteine 41-cysteine 71, cysteine 42-cysteine 54, and cysteine 81-cysteine 92.

Belongs to the cerato-ulmin hydrophobin family.

The protein localises to the secreted. Its subcellular location is the cell wall. Its function is as follows. Aerial growth, conidiation, and dispersal of filamentous fungi in the environment rely upon a capability of their secreting small amphipathic proteins called hydrophobins (HPBs) with low sequence identity. Class I can self-assemble into an outermost layer of rodlet bundles on aerial cell surfaces, conferring cellular hydrophobicity that supports fungal growth, development and dispersal; whereas Class II form highly ordered films at water-air interfaces through intermolecular interactions but contribute nothing to the rodlet structure. In Botryotinia fuckeliana, hydrophobins are not involved in conferring surface hydrophobicity to conidia and aerial hyphae and their function in sclerotia and fruiting bodies remains to be investigated. The sequence is that of Class II hydrophobin 2 from Botryotinia fuckeliana (strain B05.10) (Noble rot fungus).